A 1233-amino-acid polypeptide reads, in one-letter code: Glutamate receptor ionotropic, NMDA 2C (1233 aa).

An N-terminal signal peptide occupies residues 1-19; sequence MGGALGPALLLTSLFGAWA. Topologically, residues 20 to 554 are extracellular; the sequence is GLGPGQGEQG…SAFLEPYSPA (535 aa). N-linked (GlcNAc...) asparagine glycosylation is found at asparagine 70 and asparagine 73. An intrachain disulfide couples cysteine 82 to cysteine 317. N-linked (GlcNAc...) asparagine glycans are attached at residues asparagine 337 and asparagine 438. Cystine bridges form between cysteine 426–cysteine 453 and cysteine 433–cysteine 454. The L-glutamate site is built by serine 509, threonine 511, and arginine 516. Asparagine 539 carries an N-linked (GlcNAc...) asparagine glycan. The helical transmembrane segment at 555–575 threads the bilayer; sequence VWVMMFVMCLTVVAITVFMFE. Topologically, residues 576 to 598 are cytoplasmic; sequence YFSPVSYNQNLTRGKKSGGPAFT. The segment at residues 599–611 is an intramembrane region (discontinuously helical); sequence IGKSVWLLWALVF. The pore-forming stretch occupies residues 601-620; it reads KSVWLLWALVFNNSVPIENP. Topologically, residues 612–626 are cytoplasmic; the sequence is NNSVPIENPRGTTSK. A helical transmembrane segment spans residues 627–644; sequence IMVLVWAFFAVIFLASYT. At 645 to 813 the chain is on the extracellular side; it reads ANLAAFMIQE…EVMSSKLDID (169 aa). Asparagine 685 carries an N-linked (GlcNAc...) asparagine glycan. The L-glutamate site is built by serine 687, threonine 688, and aspartate 729. Cysteine 743 and cysteine 798 are oxidised to a cystine. The chain crosses the membrane as a helical span at residues 814–836; the sequence is NMAGVFYMLLVAMGLALLVFAWE. Residues 837 to 1233 lie on the Cytoplasmic side of the membrane; the sequence is HLVYWKLRHS…RRISSLESEV (397 aa). Phosphoserine is present on residues serine 875, serine 881, and serine 912. Residues 920–994 are disordered; sequence IENWGGGRRA…GPPLSDVSRV (75 aa). Pro residues-rich tracts occupy residues 929-956 and 975-987; these read APPP…PEPS and PQPP…PGPP. The PDZ-binding motif lies at 1231–1233; the sequence is SEV.

It belongs to the glutamate-gated ion channel (TC 1.A.10.1) family. NR2C/GRIN2C subfamily. In terms of assembly, heterotetramer. Forms heterotetrameric channels composed of two GluN1/zeta subunits (GRIN1), and two identical GluN2/epsilon subunits (GRIN2A, GRIN2B, GRIN2C or GRIN2D) or GluN3 subunits (GRIN3A or GRIN3B) (in vitro). In vivo, the subunit composition may depend on the expression levels of the different subunits. Interacts with PDZ domains of PATJ and DLG4. Interacts (via PDZ-binding motif) with SNX27 (via PDZ domain); the interaction is required for recycling to the plasma membrane when endocytosed and prevent degradation in lysosomes. Mainly expressed in brain with predominant expression is in the cerebellum, also present in the hippocampus, amygdala, caudate nucleus, corpus callosum, subthalamic nuclei and thalamus. Detected in the heart, skeletal muscle and pancreas.

The protein resides in the cell membrane. Its subcellular location is the postsynaptic cell membrane. It catalyses the reaction Ca(2+)(in) = Ca(2+)(out). The enzyme catalyses Na(+)(in) = Na(+)(out). The catalysed reaction is K(+)(in) = K(+)(out). Component of N-methyl-D-aspartate (NMDA) receptors (NMDARs) that function as heterotetrameric, ligand-gated cation channels with high calcium permeability and voltage-dependent block by Mg(2+). Participates in synaptic plasticity for learning and memory formation by contributing to the slow phase of excitatory postsynaptic current and long-term synaptic potentiation. Channel activation requires binding of the neurotransmitter L-glutamate to the GluN2 subunit, glycine or D-serine binding to the GluN1 subunit, plus membrane depolarization to eliminate channel inhibition by Mg(2+). NMDARs mediate simultaneously the potasium efflux and the influx of calcium and sodium. Each GluN2 subunit confers differential attributes to channel properties, including activation, deactivation and desensitization kinetics, pH sensitivity, Ca2(+) permeability, and binding to allosteric modulators. This Homo sapiens (Human) protein is Glutamate receptor ionotropic, NMDA 2C.